The sequence spans 646 residues: Depudecin biosynthesis cluster-specific transcription activator DEP6 (646 aa).

Residues 16–43 (CEICRERKVRCDRALPKCRRCDRLNQPC) constitute a DNA-binding region (zn(2)-C6 fungal-type). Disordered regions lie at residues 76-130 (TTAA…SQSQ) and 345-366 (KSEH…LALP). Polar residues predominate over residues 349–360 (SQGMQNRETQSG).

The protein resides in the nucleus. Transcription factor that positively regulates the expression of the gene cluster that mediates the biosynthesis of depudecin, a highly oxidized eleven-carbon linear polyketide that acts as a histone deacetylase (HDAC) inhibitor and makes a small contribution to pathogenesis. The chain is Depudecin biosynthesis cluster-specific transcription activator DEP6 from Alternaria brassicicola (Dark leaf spot agent).